The sequence spans 302 residues: tRNA-cytidine(32) 2-sulfurtransferase (302 aa).

The PP-loop motif motif lies at Ser-44–Ser-49. [4Fe-4S] cluster is bound by residues Cys-119, Cys-122, and Cys-210.

This sequence belongs to the TtcA family. Homodimer. Mg(2+) is required as a cofactor. It depends on [4Fe-4S] cluster as a cofactor.

It localises to the cytoplasm. It catalyses the reaction cytidine(32) in tRNA + S-sulfanyl-L-cysteinyl-[cysteine desulfurase] + AH2 + ATP = 2-thiocytidine(32) in tRNA + L-cysteinyl-[cysteine desulfurase] + A + AMP + diphosphate + H(+). It participates in tRNA modification. Functionally, catalyzes the ATP-dependent 2-thiolation of cytidine in position 32 of tRNA, to form 2-thiocytidine (s(2)C32). The sulfur atoms are provided by the cysteine/cysteine desulfurase (IscS) system. The chain is tRNA-cytidine(32) 2-sulfurtransferase from Teredinibacter turnerae (strain ATCC 39867 / T7901).